Consider the following 131-residue polypeptide: Translation initiation factor 5A (131 aa).

The residue at position 36 (Lys36) is a Hypusine.

This sequence belongs to the eIF-5A family.

It localises to the cytoplasm. Functions by promoting the formation of the first peptide bond. In Sulfurisphaera tokodaii (strain DSM 16993 / JCM 10545 / NBRC 100140 / 7) (Sulfolobus tokodaii), this protein is Translation initiation factor 5A.